The following is a 405-amino-acid chain: Putative colanic acid polymerase (405 aa).

A run of 11 helical transmembrane segments spans residues 5 to 25 (IRIC…VKIA), 27 to 47 (LGES…LLFL), 55 to 75 (LMIA…FGQS), 81 to 101 (YVTS…VWSI), 117 to 137 (FFYL…AQII), 171 to 191 (TALY…WLSI), 204 to 224 (MILA…FILF), 244 to 264 (PLAL…FPYI), 282 to 302 (IVGP…VVRF), 327 to 347 (GLYL…LWYM), and 376 to 396 (LFFT…CPFI).

The protein resides in the cell inner membrane. Its pathway is slime biogenesis; slime polysaccharide biosynthesis. This Escherichia coli (strain K12) protein is Putative colanic acid polymerase (wcaD).